Consider the following 56-residue polypeptide: Large ribosomal subunit protein bL32 (56 aa).

Residues Met1–His37 form a disordered region. Residues Lys7–Arg16 are compositionally biased toward basic residues. Polar residues predominate over residues Ala21–Ala31.

This sequence belongs to the bacterial ribosomal protein bL32 family.

The protein is Large ribosomal subunit protein bL32 of Shewanella loihica (strain ATCC BAA-1088 / PV-4).